Consider the following 110-residue polypeptide: Protein NATD1 (110 aa).

The N-acetyltransferase domain maps to Glu-19–Leu-109.

The protein belongs to the NATD1 family.

The sequence is that of Protein NATD1 (natd1) from Danio rerio (Zebrafish).